We begin with the raw amino-acid sequence, 257 residues long: Imidazole glycerol phosphate synthase subunit HisF (257 aa).

Catalysis depends on residues aspartate 11 and aspartate 130.

This sequence belongs to the HisA/HisF family. Heterodimer of HisH and HisF.

Its subcellular location is the cytoplasm. It carries out the reaction 5-[(5-phospho-1-deoxy-D-ribulos-1-ylimino)methylamino]-1-(5-phospho-beta-D-ribosyl)imidazole-4-carboxamide + L-glutamine = D-erythro-1-(imidazol-4-yl)glycerol 3-phosphate + 5-amino-1-(5-phospho-beta-D-ribosyl)imidazole-4-carboxamide + L-glutamate + H(+). Its pathway is amino-acid biosynthesis; L-histidine biosynthesis; L-histidine from 5-phospho-alpha-D-ribose 1-diphosphate: step 5/9. In terms of biological role, IGPS catalyzes the conversion of PRFAR and glutamine to IGP, AICAR and glutamate. The HisF subunit catalyzes the cyclization activity that produces IGP and AICAR from PRFAR using the ammonia provided by the HisH subunit. The chain is Imidazole glycerol phosphate synthase subunit HisF from Shewanella sp. (strain MR-7).